The primary structure comprises 200 residues: Flavin prenyltransferase UbiX (200 aa).

Residues 15 to 17 (GAS), Thr-41, 102 to 105 (SMGT), and Arg-137 contribute to the FMN site. Tyr-167 and Lys-183 together coordinate dimethylallyl phosphate.

This sequence belongs to the UbiX/PAD1 family.

It carries out the reaction dimethylallyl phosphate + FMNH2 = prenylated FMNH2 + phosphate. Functionally, flavin prenyltransferase that catalyzes the synthesis of the prenylated FMN cofactor (prenyl-FMN) for 4-hydroxy-3-polyprenylbenzoic acid decarboxylase UbiD. The prenyltransferase is metal-independent and links a dimethylallyl moiety from dimethylallyl monophosphate (DMAP) to the flavin N5 and C6 atoms of FMN. The chain is Flavin prenyltransferase UbiX from Alkalihalophilus pseudofirmus (strain ATCC BAA-2126 / JCM 17055 / OF4) (Bacillus pseudofirmus).